Here is a 178-residue protein sequence, read N- to C-terminus: Nucleoside triphosphate/diphosphate phosphatase (178 aa).

Residue Arg-23 is the Proton donor of the active site. Residues Asn-87, Asp-103, Asp-105, Asp-107, Asp-120, and Glu-123 each contribute to the Mg(2+) site.

Belongs to the Ntdp family. Mg(2+) is required as a cofactor.

The catalysed reaction is a ribonucleoside 5'-triphosphate + H2O = a ribonucleoside 5'-diphosphate + phosphate + H(+). The enzyme catalyses a ribonucleoside 5'-diphosphate + H2O = a ribonucleoside 5'-phosphate + phosphate + H(+). Has nucleoside phosphatase activity towards nucleoside triphosphates and nucleoside diphosphates. The polypeptide is Nucleoside triphosphate/diphosphate phosphatase (Latilactobacillus sakei subsp. sakei (strain 23K) (Lactobacillus sakei subsp. sakei)).